The sequence spans 704 residues: Elongation factor G (704 aa).

The tr-type G domain maps to 9 to 285 (AKVRNIGIMA…AIVAYLPSPL (277 aa)). Residues 18–25 (AHIDAGKT), 82–86 (DTPGH), and 136–139 (NKMD) each bind GTP.

This sequence belongs to the TRAFAC class translation factor GTPase superfamily. Classic translation factor GTPase family. EF-G/EF-2 subfamily.

The protein localises to the cytoplasm. Functionally, catalyzes the GTP-dependent ribosomal translocation step during translation elongation. During this step, the ribosome changes from the pre-translocational (PRE) to the post-translocational (POST) state as the newly formed A-site-bound peptidyl-tRNA and P-site-bound deacylated tRNA move to the P and E sites, respectively. Catalyzes the coordinated movement of the two tRNA molecules, the mRNA and conformational changes in the ribosome. The sequence is that of Elongation factor G from Thermobifida fusca (strain YX).